The following is a 406-amino-acid chain: RILP-like protein 1 (406 aa).

S7 bears the Phosphoserine mark. Residues A10–K97 enclose the RH1 domain. C47 bears the S-nitrosocysteine mark. Residues E76–H258 are a coiled coil. Disordered regions lie at residues Q255–S280 and E330–S354. Phosphoserine is present on S259. Acidic residues predominate over residues G262–S280. The 66-residue stretch at R294–L359 folds into the RH2 domain.

The protein belongs to the RILPL family. In terms of assembly, interacts (when S-nitrosylated) with GAPDH. Interacts with RAB8A; interaction is dependent on the phosphorylation of 'Thr-72' of RAB8A. Interacts with RAB10 and RAB12; the interaction is dependent on the phosphorylation of 'Thr-73' of RAB10, and 'Ser-105' of RAB12. In terms of processing, S-nitrosylation is required for the interaction with GAPDH.

Its subcellular location is the cytoplasm. The protein localises to the cytosol. It is found in the cell projection. It localises to the cilium. The protein resides in the cytoskeleton. Its subcellular location is the microtubule organizing center. The protein localises to the centrosome. It is found in the centriole. Functionally, neuroprotective protein, which acts by sequestring GAPDH in the cytosol and prevent the apoptotic function of GAPDH in the nucleus. Competes with SIAH1 for binding GAPDH. Does not regulate lysosomal morphology and distribution. Plays a role in the regulation of cell shape and polarity. Plays a role in cellular protein transport, including protein transport away from primary cilia. Binds to RAB10 following LRRK2-mediated RAB10 phosphorylation which leads to inhibition of ciliogenesis. The chain is RILP-like protein 1 (Rilpl1) from Mus musculus (Mouse).